The sequence spans 290 residues: GTPase Era (290 aa).

The region spanning 2-169 (KSGFAAILGR…KNKIYENFSE (168 aa)) is the Era-type G domain. The interval 10–17 (GRPSTGKS) is G1. Position 10–17 (10–17 (GRPSTGKS)) interacts with GTP. Positions 36–40 (QTTRN) are G2. The G3 stretch occupies residues 57 to 60 (DTPG). Residues 57–61 (DTPGF) and 119–122 (NKVD) contribute to the GTP site. The tract at residues 119 to 122 (NKVD) is G4. Residues 148–150 (ISA) are G5. The region spanning 200 to 276 (LKEELPYSLY…NLFLQVKLKK (77 aa)) is the KH type-2 domain.

It belongs to the TRAFAC class TrmE-Era-EngA-EngB-Septin-like GTPase superfamily. Era GTPase family. As to quaternary structure, monomer.

It localises to the cytoplasm. It is found in the cell inner membrane. Its function is as follows. An essential GTPase that binds both GDP and GTP, with rapid nucleotide exchange. Plays a role in 16S rRNA processing and 30S ribosomal subunit biogenesis and possibly also in cell cycle regulation and energy metabolism. The protein is GTPase Era of Borrelia garinii subsp. bavariensis (strain ATCC BAA-2496 / DSM 23469 / PBi) (Borreliella bavariensis).